Consider the following 447-residue polypeptide: Rab GDP dissociation inhibitor alpha (447 aa).

It belongs to the Rab GDI family. Interacts with RHOH. Interacts with the non-phosphorylated forms of RAB1A, RAB3A, RAB5A, RAB5B, RAB5C, RAB8A, RAB8B, RAB10, RAB12, RAB35, and RAB43. As to expression, brain; predominant in neural and sensory tissues.

Its subcellular location is the cytoplasm. It localises to the golgi apparatus. The protein localises to the trans-Golgi network. Functionally, regulates the GDP/GTP exchange reaction of most Rab proteins by inhibiting the dissociation of GDP from them, and the subsequent binding of GTP to them. Promotes the dissociation of GDP-bound Rab proteins from the membrane and inhibits their activation. Promotes the dissociation of RAB1A, RAB3A, RAB5A and RAB10 from membranes. This Homo sapiens (Human) protein is Rab GDP dissociation inhibitor alpha (GDI1).